The chain runs to 113 residues: uncharacterized protein (113 aa).

To H.influenzae HI_1053 and P.denitrificans COX locus Uncharacterized protein 4.

This is an uncharacterized protein from Cupriavidus necator (strain ATCC 17699 / DSM 428 / KCTC 22496 / NCIMB 10442 / H16 / Stanier 337) (Ralstonia eutropha).